Here is an 859-residue protein sequence, read N- to C-terminus: Cadherin-related family member 1 (859 aa).

Positions 1-21 (MRRGPQVALVLGLLCIYLAQA) are cleaved as a signal peptide. Residues 22–701 (NFAPHFFDNG…LIQTKDNPMK (680 aa)) are Extracellular-facing. Cadherin domains lie at 36–135 (NGNM…APRF), 136–247 (LQEP…APIF), 248–354 (VGTP…PPTF), 360–473 (PQNK…VPKF), 474–577 (TSHY…YPQF), and 569–691 (DVND…MAAF). 2 N-linked (GlcNAc...) asparagine glycosylation sites follow: Asn58 and Asn89. N-linked (GlcNAc...) asparagine glycosylation is found at Asn288 and Asn297. Residues 702–722 (AVGVLAGVMAIVVAITVLIST) form a helical membrane-spanning segment. Over 723-859 (ATFWRNKKSN…KKSLGNKAYV (137 aa)) the chain is Cytoplasmic. A disordered region spans residues 789–859 (PPRAPALPPP…KKSLGNKAYV (71 aa)). Positions 790–800 (PRAPALPPPPK) are enriched in pro residues. A compositionally biased stretch (polar residues) spans 802 to 816 (ASSTVAQQTVPTVSG). The segment covering 817 to 827 (SLTPQPSQQLP) has biased composition (low complexity).

Interacts with PROM1. In terms of processing, undergoes proteolytic cleavage; produces a soluble 95 kDa N-terminal fragment and a 25 kDa cell-associated C-terminal fragment. Expressed in the retina. Strongly expressed by the mitral and tufted cells in the main and accessory olfactory bulbs. Also expressed in the septum and olfactory cortex. Weakly expressed in the triangular septal nucleus and piriform cortex.

Its subcellular location is the cell membrane. In terms of biological role, potential calcium-dependent cell-adhesion protein. May be required for the structural integrity of the outer segment (OS) of photoreceptor cells. The protein is Cadherin-related family member 1 (Cdhr1) of Rattus norvegicus (Rat).